We begin with the raw amino-acid sequence, 150 residues long: SsrA-binding protein (150 aa).

Belongs to the SmpB family.

The protein resides in the cytoplasm. In terms of biological role, required for rescue of stalled ribosomes mediated by trans-translation. Binds to transfer-messenger RNA (tmRNA), required for stable association of tmRNA with ribosomes. tmRNA and SmpB together mimic tRNA shape, replacing the anticodon stem-loop with SmpB. tmRNA is encoded by the ssrA gene; the 2 termini fold to resemble tRNA(Ala) and it encodes a 'tag peptide', a short internal open reading frame. During trans-translation Ala-aminoacylated tmRNA acts like a tRNA, entering the A-site of stalled ribosomes, displacing the stalled mRNA. The ribosome then switches to translate the ORF on the tmRNA; the nascent peptide is terminated with the 'tag peptide' encoded by the tmRNA and targeted for degradation. The ribosome is freed to recommence translation, which seems to be the essential function of trans-translation. The polypeptide is SsrA-binding protein (Campylobacter jejuni subsp. jejuni serotype O:6 (strain 81116 / NCTC 11828)).